We begin with the raw amino-acid sequence, 252 residues long: Phosphate import ATP-binding protein PstB (252 aa).

The region spanning 5–247 is the ABC transporter domain; the sequence is VKIDKLNVHF…PEKKQTEDYI (243 aa). Residue 37-44 coordinates ATP; that stretch reads GPSGCGKS.

This sequence belongs to the ABC transporter superfamily. Phosphate importer (TC 3.A.1.7) family. As to quaternary structure, the complex is composed of two ATP-binding proteins (PstB), two transmembrane proteins (PstC and PstA) and a solute-binding protein (PstS).

The protein resides in the cell inner membrane. It carries out the reaction phosphate(out) + ATP + H2O = ADP + 2 phosphate(in) + H(+). In terms of biological role, part of the ABC transporter complex PstSACB involved in phosphate import. Responsible for energy coupling to the transport system. This chain is Phosphate import ATP-binding protein PstB, found in Geobacter metallireducens (strain ATCC 53774 / DSM 7210 / GS-15).